The primary structure comprises 128 residues: uncharacterized protein (128 aa).

Residues 95 to 123 (IIDFATAKRELDRLTEEIATLKGELAQDK) adopt a coiled-coil conformation.

The protein localises to the cellular thylakoid membrane. This is an uncharacterized protein from Synechocystis sp. (strain ATCC 27184 / PCC 6803 / Kazusa).